The following is a 116-amino-acid chain: Mercuric transport protein MerT (116 aa).

Helical transmembrane passes span 16–36 (LAAILASACCLGPLVLIALGF) and 46–66 (VLEPYRPIFIGVALVALFFAW). The Hg(2+) site is built by C24 and C25. Hg(2+) contacts are provided by C76 and C82. A helical transmembrane segment spans residues 94–114 (IFWGVAVLVLVALGFPYVVPF).

Belongs to the MerT family.

The protein resides in the cell inner membrane. In terms of biological role, involved in mercury resistance. Probably transfers a mercuric ion from the periplasmic Hg(2+)-binding protein MerP to the cytoplasmic mercuric reductase MerA. The polypeptide is Mercuric transport protein MerT (Pseudomonas fluorescens).